Consider the following 911-residue polypeptide: Chitin synthase G (911 aa).

Disordered stretches follow at residues methionine 1–tyrosine 66 and glycine 107–arginine 138. Residues proline 12–serine 34 show a composition bias toward basic and acidic residues. A compositionally biased stretch (polar residues) spans glutamine 54–tyrosine 66. Helical transmembrane passes span isoleucine 579–isoleucine 599, isoleucine 624–alanine 644, serine 659–valine 679, isoleucine 711–leucine 731, leucine 840–valine 860, and alanine 879–leucine 899.

Belongs to the chitin synthase family. Class III subfamily.

The protein resides in the cell membrane. It catalyses the reaction [(1-&gt;4)-N-acetyl-beta-D-glucosaminyl](n) + UDP-N-acetyl-alpha-D-glucosamine = [(1-&gt;4)-N-acetyl-beta-D-glucosaminyl](n+1) + UDP + H(+). Its function is as follows. Polymerizes chitin, a structural polymer of the cell wall and septum, by transferring the sugar moiety of UDP-GlcNAc to the non-reducing end of the growing chitin polymer. The sequence is that of Chitin synthase G (chsG) from Aspergillus fumigatus (strain ATCC MYA-4609 / CBS 101355 / FGSC A1100 / Af293) (Neosartorya fumigata).